A 491-amino-acid polypeptide reads, in one-letter code: Protein DETOXIFICATION 28 (491 aa).

Helical transmembrane passes span 47–67 (IVGP…ITQA), 77–97 (LAAI…LFIG), 127–147 (IVLF…TPIL), 160–180 (SGII…FFPI), 192–212 (VIAI…WLFV), 228–248 (VSWW…GCPL), 272–292 (GIMV…TGNL), 302–322 (MSIC…FFAG), 352–372 (IIGI…GWMF), 387–407 (ILLS…GVAV), 414–434 (LVAF…GIVM), and 444–464 (GIWA…LIFI).

Belongs to the multi antimicrobial extrusion (MATE) (TC 2.A.66.1) family.

It localises to the membrane. The sequence is that of Protein DETOXIFICATION 28 from Arabidopsis thaliana (Mouse-ear cress).